The chain runs to 1872 residues: Chitin synthase 6 (1872 aa).

The segment at 1–23 (MAQHLPPVGGNGGAHTQPSLPAL) is disordered. One can recognise a Myosin motor domain in the interval 1 to 779 (MAQHLPPVGG…CWMEIAQLSD (779 aa)). 104–111 (GESGSGKT) is a binding site for ATP. Asparagine 123, asparagine 291, asparagine 428, and asparagine 559 each carry an N-linked (GlcNAc...) asparagine glycan. The segment at 587–652 (VMQASVSSKP…VNKPSEEGAS (66 aa)) is disordered. The interval 659–683 (LDNVTKSFHAQNTNAYFVFCLKPND) is actin-binding. A glycan (N-linked (GlcNAc...) asparagine) is linked at asparagine 661. 2 consecutive transmembrane segments (helical) span residues 881–901 (WVFI…QHLG) and 920–940 (FIIW…PMLV). In terms of domain architecture, Cytochrome b5 heme-binding spans 944-1003 (QYVFTGEELSAYNGKDGKASYAAIRGQVFDIGSFIPRHPLPYLPSKLFTQYAGTDITGLF). Residues asparagine 1030, asparagine 1055, and asparagine 1120 are each glycosylated (N-linked (GlcNAc...) asparagine). The helical transmembrane segment at 1193–1213 (FILAVTIILCSIIAFKFLAAL) threads the bilayer. N-linked (GlcNAc...) asparagine glycans are attached at residues asparagine 1450 and asparagine 1556. A run of 3 helical transmembrane segments spans residues 1581–1601 (FIVF…AYIV), 1614–1634 (VPVL…IIFI), and 1641–1661 (MIAW…GLPL). The 56-residue stretch at 1814–1869 (LPSDDALLAEIREILRTADLMTVTKKGVKQELERRFGVNLDSRRAYINSATEALLS) folds into the DEK-C domain.

This sequence belongs to the chitin synthase family. Class V subfamily.

It localises to the cell membrane. It catalyses the reaction [(1-&gt;4)-N-acetyl-beta-D-glucosaminyl](n) + UDP-N-acetyl-alpha-D-glucosamine = [(1-&gt;4)-N-acetyl-beta-D-glucosaminyl](n+1) + UDP + H(+). Functionally, polymerizes chitin, a structural polymer of the cell wall and septum, by transferring the sugar moiety of UDP-GlcNAc to the non-reducing end of the growing chitin polymer. Required for appressorium penetration and invasive growth. The chain is Chitin synthase 6 from Pyricularia oryzae (strain 70-15 / ATCC MYA-4617 / FGSC 8958) (Rice blast fungus).